Here is a 388-residue protein sequence, read N- to C-terminus: UTP--glucose-1-phosphate uridylyltransferase (388 aa).

Aspartate 118 contributes to the Mg(2+) binding site.

It belongs to the CugP-type UDP-glucose pyrophosphorylase family. It depends on Mg(2+) as a cofactor.

It carries out the reaction alpha-D-glucose 1-phosphate + UTP + H(+) = UDP-alpha-D-glucose + diphosphate. Catalyzes the formation of UDP-glucose, from UTP and glucose 1-phosphate. Is highly specific since it cannot use other NTPs such as dTTP, CTP, ATP, and GTP, and other sugar-1P such as GlcNAc-1P, Gal-1P, and Man-1P, as substrates. Has probably a central and essential role as the substrate supplier for galactolipid synthesis; galactolipids are major constituents of the photosynthetic thylakoid membrane and important for photosynthetic activity. This is UTP--glucose-1-phosphate uridylyltransferase from Synechocystis sp. (strain ATCC 27184 / PCC 6803 / Kazusa).